A 338-amino-acid polypeptide reads, in one-letter code: S-adenosylmethionine:tRNA ribosyltransferase-isomerase (338 aa).

The protein belongs to the QueA family. In terms of assembly, monomer.

The protein resides in the cytoplasm. The catalysed reaction is 7-aminomethyl-7-carbaguanosine(34) in tRNA + S-adenosyl-L-methionine = epoxyqueuosine(34) in tRNA + adenine + L-methionine + 2 H(+). It participates in tRNA modification; tRNA-queuosine biosynthesis. Transfers and isomerizes the ribose moiety from AdoMet to the 7-aminomethyl group of 7-deazaguanine (preQ1-tRNA) to give epoxyqueuosine (oQ-tRNA). This Francisella tularensis subsp. tularensis (strain WY96-3418) protein is S-adenosylmethionine:tRNA ribosyltransferase-isomerase.